Here is a 106-residue protein sequence, read N- to C-terminus: Molt-inhibiting hormone (106 aa).

An N-terminal signal peptide occupies residues Met1–Ala29. Cystine bridges form between Cys36/Cys73, Cys53/Cys69, and Cys56/Cys82. The residue at position 104 (Ala104) is an Alanine amide. The propeptide occupies Gly105–Arg106.

Sinus gland of the eyestalk.

It is found in the secreted. Its function is as follows. Inhibits Y-organs where molting hormone (ecdysteroid) is secreted. A molting cycle is initiated when MIH secretion diminishes or stops. The protein is Molt-inhibiting hormone of Faxonius limosus (Spinycheek crayfish).